The primary structure comprises 455 residues: Immunoglobulin alpha-2 heavy chain (455 aa).

Ig-like domains lie at 1–95, 121–213, 227–322, and 330–432; these read EVQL…VYYC, PKVF…QDVT, PRLS…ANIT, and PEVH…KTID. Residues 1 to 115 form a variable (V) domain, involved in antigen recognition region; sequence EVQLVETGGG…GKGTTVTVSS (115 aa). 2 cysteine pairs are disulfide-bonded: C22–C95 and C141–C200. The segment at 116–455 is constant (C) domain; sequence ASPTSPKVFP…VMAEADGTCY (340 aa). Residues N162, N207, and N246 are each glycosylated (N-linked (GlcNAc...) asparagine). 2 cysteine pairs are disulfide-bonded: C225–C282 and C249–C306. N320 is a glycosylation site (N-linked (GlcNAc...) asparagine). Cysteines 352 and 415 form a disulfide. An N-linked (GlcNAc...) asparagine glycan is attached at N442.

Immunoglobulins are composed of two identical heavy chains and two identical light chains; disulfide-linked. Monomeric or polymeric.

It localises to the secreted. The protein resides in the cell membrane. In terms of biological role, immunoglobulins, also known as antibodies, are membrane-bound or secreted glycoproteins produced by B lymphocytes. In the recognition phase of humoral immunity, the membrane-bound immunoglobulins serve as receptors which, upon binding of a specific antigen, trigger the clonal expansion and differentiation of B lymphocytes into immunoglobulins-secreting plasma cells. Secreted immunoglobulins mediate the effector phase of humoral immunity, which results in the elimination of bound antigens. The antigen binding site is formed by the variable domain of one heavy chain, together with that of its associated light chain. Thus, each immunoglobulin has two antigen binding sites with remarkable affinity for a particular antigen. The variable domains are assembled by a process called V-(D)-J rearrangement and can then be subjected to somatic hypermutations which, after exposure to antigen and selection, allow affinity maturation for a particular antigen. Ig alpha is the major immunoglobulin class in body secretions. The polypeptide is Immunoglobulin alpha-2 heavy chain (Homo sapiens (Human)).